The following is a 286-amino-acid chain: Beta-lactamase SHV-13 (286 aa).

The first 21 residues, 1–21 (MRYIRLCIISLLATLPLAVHA), serve as a signal peptide directing secretion. The active-site Acyl-ester intermediate is Ser-66. Cys-73 and Cys-119 are disulfide-bonded. Glu-164 functions as the Proton acceptor in the catalytic mechanism. A substrate-binding site is contributed by 230 to 232 (KTG).

It belongs to the class-A beta-lactamase family.

The enzyme catalyses a beta-lactam + H2O = a substituted beta-amino acid. Its activity is regulated as follows. Inhibited 16-fold better by the beta-lactamase inhibitor clavulanic acid than by tazobactam. In terms of biological role, broad spectrum beta-lactamase which hydrolyzes penicillins, as well as cephalosporins except cephamycins. Also hydrolyzes aztreonam, but not imipenem. Confers highly resistance to ceftazidime, cefotaxime, aztreonam and piperacillin. This chain is Beta-lactamase SHV-13 (bla), found in Klebsiella pneumoniae.